An 864-amino-acid chain; its full sequence is DNA mismatch repair protein MutS (864 aa).

623-630 (GPNMGGKS) contacts ATP.

This sequence belongs to the DNA mismatch repair MutS family.

This protein is involved in the repair of mismatches in DNA. It is possible that it carries out the mismatch recognition step. This protein has a weak ATPase activity. The chain is DNA mismatch repair protein MutS from Polaromonas sp. (strain JS666 / ATCC BAA-500).